The primary structure comprises 413 residues: Cardiolipin synthase B (413 aa).

2 PLD phosphodiesterase domains span residues 108–135 (VFRR…SSEH) and 285–312 (RRRP…DPLS). Active-site residues include H113, K115, D120, H290, K292, and D297. Residues 388–413 (TQVDPPAQPTMETQDRVETENTGVNP) are disordered.

This sequence belongs to the phospholipase D family. Cardiolipin synthase subfamily. ClsB sub-subfamily.

The protein localises to the cell membrane. The enzyme catalyses 2 a 1,2-diacyl-sn-glycero-3-phospho-(1'-sn-glycerol) = a cardiolipin + glycerol. Functionally, catalyzes the phosphatidyl group transfer from one phosphatidylglycerol molecule to another to form cardiolipin (CL) (diphosphatidylglycerol) and glycerol. The sequence is that of Cardiolipin synthase B from Shigella flexneri.